Here is a 1360-residue protein sequence, read N- to C-terminus: Spike glycoprotein (1360 aa).

The signal sequence occupies residues 1-13 (MLFVFLTLLPSCL). Residues 14-1301 (GYIGDFRCIN…GTYEMYVKWP (1288 aa)) are Extracellular-facing. The 282-residue stretch at 15–296 (YIGDFRCINL…SYTSEIKCKT (282 aa)) folds into the BetaCoV S1-NTD domain. 5 disulfides stabilise this stretch: cysteine 21–cysteine 158, cysteine 153–cysteine 187, cysteine 165–cysteine 246, cysteine 284–cysteine 294, and cysteine 329–cysteine 354. N-linked (GlcNAc...) asparagine; by host glycosylation is found at asparagine 60 and asparagine 134. Asparagine 192 carries an N-linked (GlcNAc...) asparagine; by host glycan. The 279-residue stretch at 327–605 (PDCKIEEWLA…GINSGTTCST (279 aa)) folds into the BetaCoV S1-CTD domain. Residue asparagine 357 is glycosylated (N-linked (GlcNAc...) asparagine; by host). 2 disulfide bridges follow: cysteine 372-cysteine 425 and cysteine 384-cysteine 603. Residues asparagine 435, asparagine 566, asparagine 664, asparagine 704, asparagine 727, asparagine 747, asparagine 776, and asparagine 793 are each glycosylated (N-linked (GlcNAc...) asparagine; by host). 2 fusion peptide regions span residues 906–927 (SAIE…VESY) and 925–945 (ESYN…VQSF). Asparagine 929 is a glycosylation site (N-linked (GlcNAc...) asparagine; by host). An intrachain disulfide couples cysteine 930 to cysteine 941. Positions 1006-1056 (QKMIASSFNNAIGAIQEGFDATNSALAKIQSVVNANAEALNNLLNQLSNRF) are heptad repeat 1. The stretch at 1035 to 1079 (QSVVNANAEALNNLLNQLSNRFGAISASLQEILSRLDALEAQAQI) forms a coiled coil. Asparagine 1216, asparagine 1226, asparagine 1245, asparagine 1261, and asparagine 1282 each carry an N-linked (GlcNAc...) asparagine; by host glycan. The interval 1250–1290 (VPDLSFDIGKLNVTFLDLSYEMNRIQDAIKNLNESYINLKE) is heptad repeat 2. Residues 1263-1291 (TFLDLSYEMNRIQDAIKNLNESYINLKEI) are a coiled coil. The helical transmembrane segment at 1302–1322 (WYVWLLIGLAGVAVCVLLFFI) threads the bilayer. Over 1323–1360 (CCCTGCGSCCFKKCGNCCDEYGGRQAGIVIHNISSHED) the chain is Cytoplasmic. Positions 1356–1360 (SSHED) match the KxHxx motif.

Belongs to the betacoronaviruses spike protein family. Homotrimer; each monomer consists of a S1 and a S2 subunit. The resulting peplomers protrude from the virus surface as spikes. In terms of processing, specific enzymatic cleavages in vivo yield mature proteins. The precursor is processed into S1 and S2 by host cell furin or another cellular protease to yield the mature S1 and S2 proteins. Additionally, a second cleavage leads to the release of a fusion peptide after viral attachment to host cell receptor. Post-translationally, the cytoplasmic Cys-rich domain is palmitoylated. Spike glycoprotein is digested within host endosomes.

The protein resides in the virion membrane. The protein localises to the host endoplasmic reticulum-Golgi intermediate compartment membrane. It is found in the host cell membrane. Functionally, attaches the virion to the cell membrane by interacting with host receptor, initiating the infection. In terms of biological role, mediates fusion of the virion and cellular membranes by acting as a class I viral fusion protein. Under the current model, the protein has at least three conformational states: pre-fusion native state, pre-hairpin intermediate state, and post-fusion hairpin state. During viral and target cell membrane fusion, the coiled coil regions (heptad repeats) assume a trimer-of-hairpins structure, positioning the fusion peptide in close proximity to the C-terminal region of the ectodomain. The formation of this structure appears to drive apposition and subsequent fusion of viral and target cell membranes. Its function is as follows. Acts as a viral fusion peptide which is unmasked following S2 cleavage occurring upon virus endocytosis. The chain is Spike glycoprotein from Rat coronavirus (strain 681) (RCV-SDAV).